The primary structure comprises 377 residues: Prostaglandin reductase-3 (377 aa).

K35 carries the post-translational modification N6-acetyllysine. T185, S205, K209, Y224, S247, I269, and Y275 together coordinate NADP(+). Position 299 is a phosphoserine (S299). NADP(+) contacts are provided by residues 303-305 (FFL) and N361.

This sequence belongs to the zinc-containing alcohol dehydrogenase family. Quinone oxidoreductase subfamily.

The protein resides in the peroxisome. The enzyme catalyses 13,14-dihydro-15-oxo-prostaglandin E2 + NADP(+) = 15-oxoprostaglandin E2 + NADPH + H(+). The catalysed reaction is 13,14-dihydro-15-oxo-prostaglandin E1 + NADP(+) = 15-oxoprostaglandin E1 + NADPH + H(+). It catalyses the reaction 13,14-dihydro-15-oxo-PGF2alpha + NADP(+) = 15-oxoprostaglandin F2alpha + NADPH + H(+). It carries out the reaction 13,14-dihydro-15-oxo-prostaglandin F1alpha + NADP(+) = 15-oxoprostaglandin F1alpha + NADPH + H(+). In terms of biological role, functions as 15-oxo-prostaglandin 13-reductase and acts on 15-keto-PGE1, 15-keto-PGE2, 15-keto-PGE1-alpha and 15-keto-PGE2-alpha with highest efficiency towards 15-keto-PGE2-alpha. Overexpression represses transcriptional activity of PPARG and inhibits adipocyte differentiation. The protein is Prostaglandin reductase-3 (PTGR3) of Bos taurus (Bovine).